The primary structure comprises 143 residues: Endoribonuclease YbeY (143 aa).

Zn(2+) contacts are provided by histidine 109, histidine 113, and histidine 119.

The protein belongs to the endoribonuclease YbeY family. Requires Zn(2+) as cofactor.

The protein resides in the cytoplasm. In terms of biological role, single strand-specific metallo-endoribonuclease involved in late-stage 70S ribosome quality control and in maturation of the 3' terminus of the 16S rRNA. The sequence is that of Endoribonuclease YbeY from Leptospira borgpetersenii serovar Hardjo-bovis (strain JB197).